Here is a 374-residue protein sequence, read N- to C-terminus: Multicilin (374 aa).

Positions 164 to 212 form a coiled coil; it reads EQYWRDVADHNQKALGDALVENNQLQVSLTEKQEEIVSLKEKNIQLNEL. Positions 230 to 260 are disordered; that stretch reads RTKQNSGATQGRLPVKRSLEDFYPQSNEPDS. The segment at 330–374 is TIRT domain; it reads TDLEDVSFRTSIKEHSTIRTLAFPQGNAFTIRTSGGGYKFRWVPN.

Belongs to the geminin family. Component of the EDM complex, at least composed of e2f4, e2f5, mcidas and tfdp1. As to expression, expressed in multiciliate differentiating cells. Expression is lost by stage 26, when multiciliate cells in the skin are fully differentiated, but is then detected in the developing nephrostomes of the kidneys where multiciliate cells form at later stages.

It localises to the nucleus. In terms of biological role, transcription regulator specifically required for multiciliate cell differentiation. Acts in a multiprotein complex containing E2F4 and E2F5 that binds and activates genes required for centriole biogenesis. Activates genes required for centriole assembly (plk4, cep152) and genes specifically required for motile cilia formation (foxj1). Also promotes the deuterosome pathway of centriole biogenesis by activating expression of ccdc67/deup1, but not its paralog cep63. The sequence is that of Multicilin (mcidas) from Xenopus laevis (African clawed frog).